Reading from the N-terminus, the 427-residue chain is Enolase (427 aa).

Position 163 (Gln-163) interacts with (2R)-2-phosphoglycerate. The active-site Proton donor is Glu-205. Mg(2+) is bound by residues Asp-242, Glu-285, and Asp-312. Lys-337, Arg-366, Ser-367, and Lys-388 together coordinate (2R)-2-phosphoglycerate. The active-site Proton acceptor is the Lys-337.

Belongs to the enolase family. The cofactor is Mg(2+).

The protein resides in the cytoplasm. The protein localises to the secreted. It is found in the cell surface. It carries out the reaction (2R)-2-phosphoglycerate = phosphoenolpyruvate + H2O. It participates in carbohydrate degradation; glycolysis; pyruvate from D-glyceraldehyde 3-phosphate: step 4/5. Its function is as follows. Catalyzes the reversible conversion of 2-phosphoglycerate (2-PG) into phosphoenolpyruvate (PEP). It is essential for the degradation of carbohydrates via glycolysis. This Methylocella silvestris (strain DSM 15510 / CIP 108128 / LMG 27833 / NCIMB 13906 / BL2) protein is Enolase.